Consider the following 274-residue polypeptide: Prothoracicostatic peptide (274 aa).

The signal sequence occupies residues 1–19 (MRWCLFALWVFGVATVVTA). Positions 20–67 (AEEPHHDAAPQTDNEVDLTEDDKRAWSSLHSGWAKRAWQDMSSAWGKR) are excised as a propeptide. The residue at position 76 (Trp76) is a Tryptophan amide. Positions 77 to 91 (GKRGWQDLNSAWGKR) are excised as a propeptide. Trp100 is subject to Tryptophan amide. Residues 101–136 (GKRGWQDLNSAWGKRDDDEAMEKKSWQDLNSVWGKR) constitute a propeptide that is removed on maturation. Trp145 is modified (tryptophan amide). Positions 146-148 (GKR) are excised as a propeptide. Trp157 is subject to Tryptophan amide. The propeptide occupies 158 to 172 (GKRGWNDISSVWGKR). Tryptophan amide is present on Trp181. Residues 182 to 274 (GKRAWQDMSS…NEHSATTNEA (93 aa)) constitute a propeptide that is removed on maturation.

The protein resides in the secreted. Inhibits ecdysteroid biosynthesis in the prothoracic gland of fifth instar larvae, with maximum inhibition during the spinning stage. When administered to day 8 fifth instar larvae it produces a significant delay in the commencement spinning behavior. This Bombyx mori (Silk moth) protein is Prothoracicostatic peptide.